We begin with the raw amino-acid sequence, 819 residues long: Solute carrier organic anion transporter family member 74D (819 aa).

The disordered stretch occupies residues 1-157; that stretch reads MTKSNGDVEA…GSSAESSSSC (157 aa). The Cytoplasmic segment spans residues 1-174; sequence MTKSNGDVEA…RWARRFASTH (174 aa). Composition is skewed to polar residues over residues 24-34, 43-62, and 71-81; these read GHGQLNGNGYH, SQAFTPLLSQHNNGTTNGEV, and LYESTPSNNNE. Low complexity-rich tracts occupy residues 91–111 and 144–157; these read LKNGLGNILSSNNNGTGNGHS and DLNGGSSAESSSSC. The chain crosses the membrane as a helical span at residues 175–195; the sequence is VFMVVFLLAYILQGMYMTYFV. Residues 196 to 213 are Extracellular-facing; it reads SVITTIEKLFQIKSKTTG. The helical transmembrane segment at 214-234 threads the bilayer; it reads ILLSASEMGQICTAMLLTYFA. Residues 235–242 lie on the Cytoplasmic side of the membrane; sequence GRGHRPRW. A helical membrane pass occupies residues 243–263; sequence IACGMVLFSIAAFSCALPHFI. Over 264 to 332 the chain is Extracellular; the sequence is FGEQLMHSSV…LEQASHSKIT (69 aa). Residues Asn-284, Asn-293, and Asn-309 are each glycosylated (N-linked (GlcNAc...) asparagine). A helical transmembrane segment spans residues 333–353; the sequence is VIVLCIFFGSLLSSGIGQTAV. Residues 354 to 373 lie on the Cytoplasmic side of the membrane; the sequence is ATLGIPYIDDNVGSKQSPMY. Residues 374 to 394 traverse the membrane as a helical segment; sequence MAVTIGMRILGPASGFIFGSF. Residues 395–413 are Extracellular-facing; sequence CTRWYVNFSNPGFDATDPR. N-linked (GlcNAc...) asparagine glycosylation occurs at Asn-401. The helical transmembrane segment at 414 to 434 threads the bilayer; that stretch reads WIGAWWLGPVAIGSLMLLASI. The Cytoplasmic segment spans residues 435 to 488; it reads AMFSFPKQLRGKQKPPGQTATPAAPVEPEEKPKLKDFPKTVRRQLSNDILMFRT. A disordered region spans residues 444–466; that stretch reads RGKQKPPGQTATPAAPVEPEEKP. A helical transmembrane segment spans residues 489–509; it reads ASCVFHLLPIAGLYTFLPKYL. The Extracellular portion of the chain corresponds to 510–522; that stretch reads ETQFRLATYDANM. The helical transmembrane segment at 523-543 threads the bilayer; the sequence is IAAFCGILVMGIGIVISGLFI. Residues 544–553 lie on the Cytoplasmic side of the membrane; that stretch reads LKRKPTARGV. Residues 554–574 traverse the membrane as a helical segment; the sequence is AAWIAFTALVYSAGMIILMFI. Residues 575–667 lie on the Extracellular side of the membrane; the sequence is GCSMNDFAGY…NGYCDNNCKN (93 aa). The Kazal-like domain occupies 593 to 651; sequence ALIEPTCSAALNCTCDKENFAPICADGKMYISACHAGCSSSSLRPSDNRTLYSDCACIP. Cystine bridges form between Cys-599/Cys-630, Cys-607/Cys-626, and Cys-616/Cys-649. Residue Asn-604 is glycosylated (N-linked (GlcNAc...) asparagine). The N-linked (GlcNAc...) asparagine glycan is linked to Asn-640. Residues 668–688 form a helical membrane-spanning segment; sequence FIYFILIFAICVFMHSTSEVG. Over 689-707 the chain is Cytoplasmic; the sequence is SMLLVMRCTHPKDKAMAMG. Residues 708-728 traverse the membrane as a helical segment; the sequence is VIQSAIGLFGNVPCPIIYGAV. Residues 729–756 lie on the Extracellular side of the membrane; the sequence is VDSACLIWKSVCGKHGACSLYDADTFRQ. A helical transmembrane segment spans residues 757–777; sequence YFLGITAGIMFLAFLMDLVVW. Residues 778 to 819 are Cytoplasmic-facing; it reads RKAHRIDIAPEDPQEGGPASNGRTLEVSESKQPITPAPDTTV. The disordered stretch occupies residues 787–819; the sequence is PEDPQEGGPASNGRTLEVSESKQPITPAPDTTV. The span at 807–819 shows a compositional bias: polar residues; sequence SKQPITPAPDTTV.

The protein belongs to the organo anion transporter (TC 2.A.60) family.

The protein localises to the cell membrane. In terms of biological role, transporter that mediates the cellular uptake of ecdysteroids, including ecdysone, from the hemolymph. The protein is Solute carrier organic anion transporter family member 74D of Drosophila melanogaster (Fruit fly).